Here is a 479-residue protein sequence, read N- to C-terminus: Adenosylhomocysteinase (479 aa).

Substrate-binding residues include Thr-56, Asp-133, and Glu-199. Position 200–202 (200–202) interacts with NAD(+); sequence TTT. Positions 229 and 233 each coordinate substrate. NAD(+) contacts are provided by residues Asn-234, 263–268, Glu-286, Asn-321, 342–344, and Asn-390; these read GYGDVG and IGH.

It belongs to the adenosylhomocysteinase family. As to quaternary structure, homotetramer. Requires NAD(+) as cofactor.

It catalyses the reaction S-adenosyl-L-homocysteine + H2O = L-homocysteine + adenosine. The protein operates within amino-acid biosynthesis; L-homocysteine biosynthesis; L-homocysteine from S-adenosyl-L-homocysteine: step 1/1. Adenosylhomocysteine is a competitive inhibitor of S-adenosyl-L-methionine-dependent methyl transferase reactions; therefore adenosylhomocysteinase may play a key role in the control of methylations via regulation of the intracellular concentration of adenosylhomocysteine. This is Adenosylhomocysteinase from Plasmodium yoelii yoelii.